Consider the following 68-residue polypeptide: Prokaryotic ubiquitin-like protein Pup (68 aa).

A disordered region spans residues 1-37 (MAQERIFGTGSRREDEPDTPAPVDPPVSGAAQAQRDM). Positions 24 to 62 (DPPVSGAAQAQRDMQGTDDLLAEIDGVLETNAEAFVKGF) are ARC ATPase binding. Position 68 is a deamidated glutamine (glutamine 68). An Isoglutamyl lysine isopeptide (Gln-Lys) (interchain with K-? in acceptor proteins) cross-link involves residue glutamine 68.

It belongs to the prokaryotic ubiquitin-like protein family. As to quaternary structure, strongly interacts with the proteasome-associated ATPase ARC through a hydrophobic interface; the interacting region of Pup lies in its C-terminal half. There is one Pup binding site per ARC hexamer ring. Post-translationally, is modified by deamidation of its C-terminal glutamine to glutamate by the deamidase Dop, a prerequisite to the subsequent pupylation process.

It functions in the pathway protein degradation; proteasomal Pup-dependent pathway. Protein modifier that is covalently attached to lysine residues of substrate proteins, thereby targeting them for proteasomal degradation. The tagging system is termed pupylation. This Kocuria rhizophila (strain ATCC 9341 / DSM 348 / NBRC 103217 / DC2201) protein is Prokaryotic ubiquitin-like protein Pup.